Reading from the N-terminus, the 64-residue chain is uncharacterized protein (64 aa).

This is an uncharacterized protein from Mycoplasma (Bacteriophage L2).